The following is an 875-amino-acid chain: DNA topoisomerase 3-beta (875 aa).

One can recognise a Toprim domain in the interval 3 to 153 (SVLMVAEKPS…QVTYRAHFSA (151 aa)). In terms of domain architecture, Topo IA-type catalytic spans 170-589 (NENEAKSVDA…AIKIFKLKFM (420 aa)). Tyr-332 functions as the O-(5'-phospho-DNA)-tyrosine intermediate in the catalytic mechanism. Residues 371 to 391 (QTPRKGKDAGDHPPITPMKLG) are disordered.

The protein belongs to the type IA topoisomerase family.

The catalysed reaction is ATP-independent breakage of single-stranded DNA, followed by passage and rejoining.. In terms of biological role, releases the supercoiling and torsional tension of DNA introduced during the DNA replication and transcription by transiently cleaving and rejoining one strand of the DNA duplex. Introduces a single-strand break via transesterification at a target site in duplex DNA. The scissile phosphodiester is attacked by the catalytic tyrosine of the enzyme, resulting in the formation of a DNA-(5'-phosphotyrosyl)-enzyme intermediate and the expulsion of a 3'-OH DNA strand. The free DNA strand than undergoes passage around the unbroken strand thus removing DNA supercoils. Finally, in the religation step, the DNA 3'-OH attacks the covalent intermediate to expel the active-site tyrosine and restore the DNA phosphodiester backbone. Weakly relaxes negative supercoils and displays a distinct preference for binding single-stranded DNA. The sequence is that of DNA topoisomerase 3-beta (Top3beta) from Drosophila melanogaster (Fruit fly).